Consider the following 428-residue polypeptide: CinA-like protein (428 aa).

The protein belongs to the CinA family.

The chain is CinA-like protein from Endomicrobium trichonymphae.